A 490-amino-acid polypeptide reads, in one-letter code: Beta-1,3-glucan-binding protein 1 (490 aa).

The N-terminal stretch at 1-19 (MYKQTVVIFLLCFFICVSC) is a signal peptide. The CBM39 domain occupies 20-119 (YEVPPAKLEA…GEWTVTGYVD (100 aa)). The region spanning 152–490 (PPTSQNTYPC…QVDYVRVYAL (339 aa)) is the GH16 domain. N-linked (GlcNAc...) asparagine glycosylation occurs at Asn372.

It belongs to the insect beta-1,3-glucan binding protein family. In terms of assembly, monomer. As to expression, hemolymph.

The protein localises to the secreted. Its function is as follows. Plays a role in the recognition of invading microorganisms activating the phenoloxidase cascade. Binds specifically to beta-1,3-glucan. Binds the Aspergillus niger cell wall component alpha-1,3-glucan, a fungal pathogen-associated molecular pattern (PAMP) that activates the host immune response. The protein is Beta-1,3-glucan-binding protein 1 of Galleria mellonella (Greater wax moth).